Consider the following 213-residue polypeptide: Imidazole glycerol phosphate synthase subunit HisH (213 aa).

The Glutamine amidotransferase type-1 domain occupies 1 to 212 (MLAILDYKAG…HRYCTEAADA (212 aa)). C79 (nucleophile) is an active-site residue. Residues H187 and E189 contribute to the active site.

Heterodimer of HisH and HisF.

It is found in the cytoplasm. The catalysed reaction is 5-[(5-phospho-1-deoxy-D-ribulos-1-ylimino)methylamino]-1-(5-phospho-beta-D-ribosyl)imidazole-4-carboxamide + L-glutamine = D-erythro-1-(imidazol-4-yl)glycerol 3-phosphate + 5-amino-1-(5-phospho-beta-D-ribosyl)imidazole-4-carboxamide + L-glutamate + H(+). The enzyme catalyses L-glutamine + H2O = L-glutamate + NH4(+). Its pathway is amino-acid biosynthesis; L-histidine biosynthesis; L-histidine from 5-phospho-alpha-D-ribose 1-diphosphate: step 5/9. Its function is as follows. IGPS catalyzes the conversion of PRFAR and glutamine to IGP, AICAR and glutamate. The HisH subunit catalyzes the hydrolysis of glutamine to glutamate and ammonia as part of the synthesis of IGP and AICAR. The resulting ammonia molecule is channeled to the active site of HisF. The chain is Imidazole glycerol phosphate synthase subunit HisH from Nitratidesulfovibrio vulgaris (strain DP4) (Desulfovibrio vulgaris).